The following is a 476-amino-acid chain: Ribulose bisphosphate carboxylase large chain (476 aa).

Substrate-binding residues include N124 and T174. The active-site Proton acceptor is the K176. K178 is a binding site for substrate. 3 residues coordinate Mg(2+): K202, D204, and E205. Residue K202 is modified to N6-carboxylysine. H295 serves as the catalytic Proton acceptor. Positions 296, 328, and 380 each coordinate substrate.

This sequence belongs to the RuBisCO large chain family. Type I subfamily. Heterohexadecamer of 8 large chains and 8 small chains; disulfide-linked. The disulfide link is formed within the large subunit homodimers. Mg(2+) serves as cofactor. The disulfide bond which can form in the large chain dimeric partners within the hexadecamer appears to be associated with oxidative stress and protein turnover.

The protein localises to the carboxysome. It carries out the reaction 2 (2R)-3-phosphoglycerate + 2 H(+) = D-ribulose 1,5-bisphosphate + CO2 + H2O. The enzyme catalyses D-ribulose 1,5-bisphosphate + O2 = 2-phosphoglycolate + (2R)-3-phosphoglycerate + 2 H(+). Its function is as follows. RuBisCO catalyzes two reactions: the carboxylation of D-ribulose 1,5-bisphosphate, the primary event in carbon dioxide fixation, as well as the oxidative fragmentation of the pentose substrate in the photorespiration process. Both reactions occur simultaneously and in competition at the same active site. This chain is Ribulose bisphosphate carboxylase large chain, found in Acaryochloris marina (strain MBIC 11017).